Here is a 355-residue protein sequence, read N- to C-terminus: Probable butyrate kinase (355 aa).

This sequence belongs to the acetokinase family.

It is found in the cytoplasm. The enzyme catalyses butanoate + ATP = butanoyl phosphate + ADP. The sequence is that of Probable butyrate kinase from Listeria welshimeri serovar 6b (strain ATCC 35897 / DSM 20650 / CCUG 15529 / CIP 8149 / NCTC 11857 / SLCC 5334 / V8).